Here is a 102-residue protein sequence, read N- to C-terminus: A-type ATP synthase subunit F (102 aa).

Belongs to the V-ATPase F subunit family. As to quaternary structure, has multiple subunits with at least A(3), B(3), C, D, E, F, H, I and proteolipid K(x).

The protein localises to the cell membrane. In terms of biological role, component of the A-type ATP synthase that produces ATP from ADP in the presence of a proton gradient across the membrane. This chain is A-type ATP synthase subunit F, found in Thermococcus kodakarensis (strain ATCC BAA-918 / JCM 12380 / KOD1) (Pyrococcus kodakaraensis (strain KOD1)).